The primary structure comprises 331 residues: Glycerophosphodiester phosphodiesterase 1 (331 aa).

Residues 1–3 are Cytoplasmic-facing; the sequence is MWL. Residues 4–24 traverse the membrane as a helical segment; it reads WEDQGGLLGPFSFVLVLLLVV. Residues 25 to 248 are Lumenal-facing; sequence TRSPFNACVL…PRYSVFWKQS (224 aa). Residues 65–331 form the GP-PDE domain; that stretch reads VSAIAHRGGS…SMLEDCAPHF (267 aa). Residues E97 and D99 each coordinate Mg(2+). Residue N168 is glycosylated (N-linked (GlcNAc...) asparagine). D174 serves as a coordination point for Mg(2+). The chain crosses the membrane as a helical span at residues 249–269; that stretch reads VFVVLDILLDWSMHNVLWYLC. Residues 270–331 are Cytoplasmic-facing; that stretch reads GISAFLMQKD…SMLEDCAPHF (62 aa).

It belongs to the glycerophosphoryl diester phosphodiesterase family. In terms of assembly, interacts with PRAF2. Interacts with RGS16. Mg(2+) serves as cofactor. Post-translationally, N-glycosylated. In terms of tissue distribution, widely expressed. Highly expressed in the brain and spinal cord, followed by kidney, liver, and testis. In contrast, little or no expression is detected in the heart or spleen.

Its subcellular location is the cell membrane. It is found in the cytoplasmic vesicle membrane. The catalysed reaction is sn-glycero-3-phospho-1D-myo-inositol + H2O = myo-inositol + sn-glycerol 3-phosphate + H(+). It catalyses the reaction 1-O-(1Z-octadecenyl)-sn-glycero-3-phospho-(N-5Z,8Z,11Z,14Z-eicosatetraenoyl)-ethanolamine + H2O = 1-O-(1Z-octadecenyl)-sn-glycero-3-phosphate + N-(5Z,8Z,11Z,14Z-eicosatetraenoyl)-ethanolamine + H(+). The enzyme catalyses 1-O-(1Z-octadecenyl)-sn-glycero-3-phospho-(N-9Z-octadecenoyl)-ethanolamine + H2O = 1-O-(1Z-octadecenyl)-sn-glycero-3-phosphate + N-(9Z-octadecenoyl) ethanolamine + H(+). It carries out the reaction 1-O-(1Z-octadecenyl)-sn-glycero-3-phospho-N-hexadecanoyl-ethanolamine + H2O = 1-O-(1Z-octadecenyl)-sn-glycero-3-phosphate + N-hexadecanoylethanolamine + H(+). The catalysed reaction is N-(4Z,7Z,10Z,13Z,16Z,19Z)-docosahexaenoyl-sn-glycero-3-phosphoethanolamine + H2O = N-(4Z,7Z,10Z,13Z,16Z,19Z)-docosahexaenoyl ethanolamine + sn-glycerol 3-phosphate + H(+). It catalyses the reaction N-eicosanoyl-sn-glycero-3-phosphoethanolamine + H2O = N-eicosanoyl ethanolamine + sn-glycerol 3-phosphate + H(+). The enzyme catalyses N-hexadecanoyl-sn-glycero-3-phosphoethanolamine + H2O = N-hexadecanoylethanolamine + sn-glycerol 3-phosphate + H(+). It carries out the reaction N-(9Z-octadecenoyl)-sn-glycero-3-phosphoethanolamine + H2O = N-(9Z-octadecenoyl) ethanolamine + sn-glycerol 3-phosphate + H(+). The catalysed reaction is N-(5Z,8Z,11Z,14Z-eicosatetraenoyl)-sn-glycero-3-phosphoethanolamine + H2O = N-(5Z,8Z,11Z,14Z-eicosatetraenoyl)-ethanolamine + sn-glycerol 3-phosphate + H(+). Its activity is regulated as follows. Inhibited by EDTA, calcium chloride, and zinc chloride. Enhanced by magnesium chloride. Glycerophosphodiester phosphodiesterase activity can be modulated by G-protein signaling pathways. Its function is as follows. Hydrolyzes the phosphodiester bond of glycerophosphodiesters such as glycerophosphoinositol (GroPIns) and glycerophosphoethanolamine (GroPEth), to yield a glycerol phosphate and an alcohol. Hydrolyzes glycerophospho-N-acylethanolamines to N-acylethanolamines in the brain and participates in bioactive N-acylethanolamine biosynthesis such as anandamide (an endocannabinoid), N-palmitoylethanolamine (an anti-inflammatory), and N-oleoylethanolamine (an anorexic). In addition, has a lysophospholipase D activity by hydrolyzing N-acyl-lysoplasmenylethanolamine (N-acyl-lysoPlsEt) to N-acylethanolamine. However lysophospholipase D activity is lower than glycerophosphodiester phosphodiesterase activity. Has little or no activity towards glycerophosphocholine. The polypeptide is Glycerophosphodiester phosphodiesterase 1 (Mus musculus (Mouse)).